Reading from the N-terminus, the 118-residue chain is Large ribosomal subunit protein uL18 (118 aa).

This sequence belongs to the universal ribosomal protein uL18 family. As to quaternary structure, part of the 50S ribosomal subunit; part of the 5S rRNA/L5/L18/L25 subcomplex. Contacts the 5S and 23S rRNAs.

Its function is as follows. This is one of the proteins that bind and probably mediate the attachment of the 5S RNA into the large ribosomal subunit, where it forms part of the central protuberance. The sequence is that of Large ribosomal subunit protein uL18 from Myxococcus xanthus (strain DK1622).